Reading from the N-terminus, the 108-residue chain is uncharacterized protein (108 aa).

The HTH hxlR-type domain maps to Cys7–Phe106.

This is an uncharacterized protein from Bacillus subtilis (strain 168).